We begin with the raw amino-acid sequence, 196 residues long: uncharacterized protein (196 aa).

To H.influenzae HI_0431.

This is an uncharacterized protein from Salmonella typhi.